We begin with the raw amino-acid sequence, 353 residues long: Photosystem II protein D1 (353 aa).

Thr-2 carries the post-translational modification N-acetylthreonine. Thr-2 bears the Phosphothreonine mark. 3 helical membrane-spanning segments follow: residues 29–46 (YIGWFGVLMIPTLLTATS), 118–133 (HFLLGVACYMGREWEL), and 142–156 (WIAVAYSAPVAAATA). His-118 is a binding site for chlorophyll a. Tyr-126 is a binding site for pheophytin a. Residues Asp-170 and Glu-189 each contribute to the [CaMn4O5] cluster site. Residues 197-218 (FHMLGVAGVFGGSLFSAMHGSL) traverse the membrane as a helical segment. His-198 is a binding site for chlorophyll a. A quinone is bound by residues His-215 and 264–265 (SF). A Fe cation-binding site is contributed by His-215. His-272 lines the Fe cation pocket. The helical transmembrane segment at 274 to 288 (FLAAWPVVGIWFTAL) threads the bilayer. [CaMn4O5] cluster contacts are provided by His-332, Glu-333, Asp-342, and Ala-344. A propeptide spanning residues 345 to 353 (AVEVPAING) is cleaved from the precursor.

Belongs to the reaction center PufL/M/PsbA/D family. As to quaternary structure, PSII is composed of 1 copy each of membrane proteins PsbA, PsbB, PsbC, PsbD, PsbE, PsbF, PsbH, PsbI, PsbJ, PsbK, PsbL, PsbM, PsbT, PsbX, PsbY, PsbZ, Psb30/Ycf12, at least 3 peripheral proteins of the oxygen-evolving complex and a large number of cofactors. It forms dimeric complexes. The D1/D2 heterodimer binds P680, chlorophylls that are the primary electron donor of PSII, and subsequent electron acceptors. It shares a non-heme iron and each subunit binds pheophytin, quinone, additional chlorophylls, carotenoids and lipids. D1 provides most of the ligands for the Mn4-Ca-O5 cluster of the oxygen-evolving complex (OEC). There is also a Cl(-1) ion associated with D1 and D2, which is required for oxygen evolution. The PSII complex binds additional chlorophylls, carotenoids and specific lipids. is required as a cofactor. In terms of processing, tyr-161 forms a radical intermediate that is referred to as redox-active TyrZ, YZ or Y-Z. C-terminally processed by CTPA; processing is essential to allow assembly of the oxygen-evolving complex and thus photosynthetic growth.

It localises to the plastid. The protein resides in the chloroplast thylakoid membrane. It carries out the reaction 2 a plastoquinone + 4 hnu + 2 H2O = 2 a plastoquinol + O2. In terms of biological role, photosystem II (PSII) is a light-driven water:plastoquinone oxidoreductase that uses light energy to abstract electrons from H(2)O, generating O(2) and a proton gradient subsequently used for ATP formation. It consists of a core antenna complex that captures photons, and an electron transfer chain that converts photonic excitation into a charge separation. The D1/D2 (PsbA/PsbD) reaction center heterodimer binds P680, the primary electron donor of PSII as well as several subsequent electron acceptors. The sequence is that of Photosystem II protein D1 from Hordeum vulgare (Barley).